Consider the following 260-residue polypeptide: Methanethiol S-methyltransferase (260 aa).

A run of 5 helical transmembrane segments spans residues 27–47 (CYLF…GIGV), 55–75 (PGIT…LFAA), 107–127 (CLVL…VWNV), 134–154 (GLLI…TFLI), and 196–216 (FLIA…FAIL).

This sequence belongs to the nurim family.

The protein resides in the membrane. The catalysed reaction is methanethiol + S-adenosyl-L-methionine = dimethyl sulfide + S-adenosyl-L-homocysteine + H(+). Catalyzes the methylation of methanethiol (MeSH) to yield dimethylsulphide (DMS). The chain is Methanethiol S-methyltransferase from Pseudomonas sp. (strain GM41(2012)).